The primary structure comprises 216 residues: Octanoyltransferase (216 aa).

A BPL/LPL catalytic domain is found at 29–209; that stretch reads DRAGECVWLL…SFDAVFGPCP (181 aa). Substrate is bound by residues 68–75, 140–142, and 153–155; these read RGGQYTYH, AIG, and GFA. C171 functions as the Acyl-thioester intermediate in the catalytic mechanism.

Belongs to the LipB family.

It is found in the cytoplasm. It catalyses the reaction octanoyl-[ACP] + L-lysyl-[protein] = N(6)-octanoyl-L-lysyl-[protein] + holo-[ACP] + H(+). Its pathway is protein modification; protein lipoylation via endogenous pathway; protein N(6)-(lipoyl)lysine from octanoyl-[acyl-carrier-protein]: step 1/2. In terms of biological role, catalyzes the transfer of endogenously produced octanoic acid from octanoyl-acyl-carrier-protein onto the lipoyl domains of lipoate-dependent enzymes. Lipoyl-ACP can also act as a substrate although octanoyl-ACP is likely to be the physiological substrate. The polypeptide is Octanoyltransferase (Rhodospirillum rubrum (strain ATCC 11170 / ATH 1.1.1 / DSM 467 / LMG 4362 / NCIMB 8255 / S1)).